A 1152-amino-acid chain; its full sequence is DNA-directed RNA polymerase subunit beta (1152 aa).

The protein belongs to the RNA polymerase beta chain family. As to quaternary structure, the RNAP catalytic core consists of 2 alpha, 1 beta, 1 beta' and 1 omega subunit. When a sigma factor is associated with the core the holoenzyme is formed, which can initiate transcription.

It carries out the reaction RNA(n) + a ribonucleoside 5'-triphosphate = RNA(n+1) + diphosphate. Functionally, DNA-dependent RNA polymerase catalyzes the transcription of DNA into RNA using the four ribonucleoside triphosphates as substrates. This chain is DNA-directed RNA polymerase subunit beta, found in Deinococcus geothermalis (strain DSM 11300 / CIP 105573 / AG-3a).